A 421-amino-acid chain; its full sequence is ATP-dependent RNA helicase RhlB (421 aa).

Residues 9–37 carry the Q motif motif; sequence QKFSDFALHPKVIEALENKGFHNCTPIQA. The Helicase ATP-binding domain occupies 40 to 219; that stretch reads LPLTLAGRDV…FEQMNNAEYV (180 aa). ATP is bound at residue 53–60; sequence AQTGTGKT. The short motif at 165–168 is the DEAD box element; the sequence is DEAD. One can recognise a Helicase C-terminal domain in the interval 245-390; the sequence is RLLQTLIEEE…VSKYNPEALM (146 aa). A disordered region spans residues 393–421; that stretch reads LPKPLRLTRSRPGNGPRRTGAPRNRRRSG. Low complexity predominate over residues 403–414; it reads RPGNGPRRTGAP.

The protein belongs to the DEAD box helicase family. RhlB subfamily. Component of the RNA degradosome, which is a multiprotein complex involved in RNA processing and mRNA degradation.

Its subcellular location is the cytoplasm. The catalysed reaction is ATP + H2O = ADP + phosphate + H(+). DEAD-box RNA helicase involved in RNA degradation. Has RNA-dependent ATPase activity and unwinds double-stranded RNA. The sequence is that of ATP-dependent RNA helicase RhlB from Citrobacter koseri (strain ATCC BAA-895 / CDC 4225-83 / SGSC4696).